A 336-amino-acid chain; its full sequence is Holliday junction branch migration complex subunit RuvB (336 aa).

The segment at 1-182 (MKERIVNLET…FGMSFRMQFY (182 aa)) is large ATPase domain (RuvB-L). ATP contacts are provided by residues Leu21, Arg22, Gly63, Lys66, Thr67, Ser68, 129-131 (EDF), Arg172, Tyr182, and Arg219. Mg(2+) is bound at residue Thr67. The interval 183–253 (NPSELALIIK…ITLHALNELG (71 aa)) is small ATPAse domain (RuvB-S). A head domain (RuvB-H) region spans residues 256 to 336 (ELGFDEADLA…IPTLNPQTLF (81 aa)). Residues Arg310 and Arg315 each contribute to the DNA site.

Belongs to the RuvB family. Homohexamer. Forms an RuvA(8)-RuvB(12)-Holliday junction (HJ) complex. HJ DNA is sandwiched between 2 RuvA tetramers; dsDNA enters through RuvA and exits via RuvB. An RuvB hexamer assembles on each DNA strand where it exits the tetramer. Each RuvB hexamer is contacted by two RuvA subunits (via domain III) on 2 adjacent RuvB subunits; this complex drives branch migration. In the full resolvosome a probable DNA-RuvA(4)-RuvB(12)-RuvC(2) complex forms which resolves the HJ.

Its subcellular location is the cytoplasm. The catalysed reaction is ATP + H2O = ADP + phosphate + H(+). Its function is as follows. The RuvA-RuvB-RuvC complex processes Holliday junction (HJ) DNA during genetic recombination and DNA repair, while the RuvA-RuvB complex plays an important role in the rescue of blocked DNA replication forks via replication fork reversal (RFR). RuvA specifically binds to HJ cruciform DNA, conferring on it an open structure. The RuvB hexamer acts as an ATP-dependent pump, pulling dsDNA into and through the RuvAB complex. RuvB forms 2 homohexamers on either side of HJ DNA bound by 1 or 2 RuvA tetramers; 4 subunits per hexamer contact DNA at a time. Coordinated motions by a converter formed by DNA-disengaged RuvB subunits stimulates ATP hydrolysis and nucleotide exchange. Immobilization of the converter enables RuvB to convert the ATP-contained energy into a lever motion, pulling 2 nucleotides of DNA out of the RuvA tetramer per ATP hydrolyzed, thus driving DNA branch migration. The RuvB motors rotate together with the DNA substrate, which together with the progressing nucleotide cycle form the mechanistic basis for DNA recombination by continuous HJ branch migration. Branch migration allows RuvC to scan DNA until it finds its consensus sequence, where it cleaves and resolves cruciform DNA. This Helicobacter pylori (strain ATCC 700392 / 26695) (Campylobacter pylori) protein is Holliday junction branch migration complex subunit RuvB.